Reading from the N-terminus, the 335-residue chain is HTH-type transcriptional regulator LacR (335 aa).

The HTH lacI-type domain maps to 1–58 (MRTIKEIALESGYSPATVSRLLNNDPNLSITADTKNKILEIANKLGYWEDHQEKKIKP). Residues 4 to 23 (IKEIALESGYSPATVSRLLN) constitute a DNA-binding region (H-T-H motif).

It functions in the pathway carbohydrate metabolism; lactose degradation [regulation]. In terms of biological role, negatively regulates the transcription of the lactose utilization genes lacL and lacM. This chain is HTH-type transcriptional regulator LacR (lacR), found in Lactobacillus helveticus (Lactobacillus suntoryeus).